The sequence spans 207 residues: Mediator of RNA polymerase II transcription subunit 18 (207 aa).

This sequence belongs to the Mediator complex subunit 18 family. Component of the Mediator complex. Interacts with med17, prk1 and rbp1.

Its subcellular location is the nucleus. Functionally, component of the Mediator complex, a coactivator involved in the regulated transcription of nearly all RNA polymerase II-dependent genes. Mediator functions as a bridge to convey information from gene-specific regulatory proteins to the basal RNA polymerase II transcription machinery. Mediator is recruited to promoters by direct interactions with regulatory proteins and serves as a scaffold for the assembly of a functional preinitiation complex with RNA polymerase II and the general transcription factors. The protein is Mediator of RNA polymerase II transcription subunit 18 (med18) of Schizosaccharomyces pombe (strain 972 / ATCC 24843) (Fission yeast).